Consider the following 906-residue polypeptide: MAVPDQKSPNVLLQNLCCRILGKGEADVAQQFQYAVRVIGSNFAPTVERDEFLVTEKIKKEFVRQRREADGALFSELHRKLQSQGVLKNRWSILYLLLSLSEDPRKQPNKTSSFAALFAQALPRDAHSTPYYYARPQSLPLSYQDRNVQCAQNAASIGSSGISSIGMYALNGPTPQSIIQGQSNQTPNMGDALRQQLGSRLAWTLAAGQQPSQQSTTTKGLPNTVSRNVPRTRREGDSSGSVEITETSLVRDLLYVFQGIDGKFVKMCNSENCYKVDGKVAVSKSLKDITSKLSELGWLHNKIKKYTDQRSLDRAFGLVGQSFCAALHQELKEYYRLLSVLHSQLQVEDDQGVNLGVESSLTLRRLLVWTFDPKIRLKTLAALVDHCQGRKGGELASAVHAYTKTGDPYMRSLVQHILGLVAYPILNFLYRWIYDGELEDTYHEFFVASDPVVKTDRLWHDKYSLRKSMIPSFMTMDQSRKVLLIGKSINFLHQVCHDQTPASKAMAVGKSAESPKDAAELFTDLENAFQTKIDAAYFDTSKYLLDVLNKNYNLLEHMQAMRRYLLLGQGDFIRHLMDLLKPELVRPATTLYQHNLTGILETAVRATNAQFDNPEILKRLDVRLLEVSPGDTGWDVFSLDYHVDGPIATVFTRECMSHYLRVFNFLWRAKRMEYILTDIWKGHMCNAKLLKGMPELSGVLHQCHILASEMVHFIHQMQYYITFEVLECSWDELWNKVLKAQDLDHIIAAHDVFLDTIISRCLLDSESRALLNQLRAVFDQIIEFQNAQDALYRAALEELQQRLQFEERKKERESEGEWGVTAAEEDVENKRIQEFQESIPKMRSQLRILTHFYQGIVQQFLVLLTTSTDESLRFLSFRLDFNEHYKAREPRLRVSMGTRGRRSFHV.

The segment covering 208-229 (GQQPSQQSTTTKGLPNTVSRNV) has biased composition (polar residues). Residues 208 to 242 (GQQPSQQSTTTKGLPNTVSRNVPRTRREGDSSGSV) are disordered.

Belongs to the TUBGCP family. As to quaternary structure, interacts with gamma-tubulin.

It localises to the cytoplasm. It is found in the cytoskeleton. The protein localises to the microtubule organizing center. Its subcellular location is the centrosome. Functionally, necessary for the recruitment of gamma-tubulin to the centrosome and for the formation of a functional centrosome. This chain is Gamma-tubulin complex component 3 homolog (tubgcp3), found in Xenopus laevis (African clawed frog).